The following is a 546-amino-acid chain: Chaperonin GroEL 1 (546 aa).

ATP contacts are provided by residues 30 to 33, K51, 87 to 91, G415, 479 to 481, and D495; these read TLGP, DGTTT, and NAA. The segment at 526–546 is disordered; sequence KEDAPMPGGMPGGMGGMGMDM. The segment covering 534–546 has biased composition (gly residues); sequence GMPGGMGGMGMDM.

Belongs to the chaperonin (HSP60) family. As to quaternary structure, forms a cylinder of 14 subunits composed of two heptameric rings stacked back-to-back. Interacts with the co-chaperonin GroES.

The protein localises to the cytoplasm. It carries out the reaction ATP + H2O + a folded polypeptide = ADP + phosphate + an unfolded polypeptide.. Functionally, together with its co-chaperonin GroES, plays an essential role in assisting protein folding. The GroEL-GroES system forms a nano-cage that allows encapsulation of the non-native substrate proteins and provides a physical environment optimized to promote and accelerate protein folding. The chain is Chaperonin GroEL 1 from Burkholderia cenocepacia (strain HI2424).